Here is a 171-residue protein sequence, read N- to C-terminus: Large ribosomal subunit protein uL10 (171 aa).

It belongs to the universal ribosomal protein uL10 family. In terms of assembly, part of the ribosomal stalk of the 50S ribosomal subunit. The N-terminus interacts with L11 and the large rRNA to form the base of the stalk. The C-terminus forms an elongated spine to which L12 dimers bind in a sequential fashion forming a multimeric L10(L12)X complex.

Forms part of the ribosomal stalk, playing a central role in the interaction of the ribosome with GTP-bound translation factors. This is Large ribosomal subunit protein uL10 from Methylocella silvestris (strain DSM 15510 / CIP 108128 / LMG 27833 / NCIMB 13906 / BL2).